The sequence spans 253 residues: MSYLRRCLPLAQQITLLNQPAAPVYSICRQRLFSTSSRSFTKTYLFTLDRPILQSTTSTLSGQHKIHTSAHHFKKRKIQEETQKHELDLLRYDIKALKDAPKPALYLGLAGLIPFVSAPLLMNVTGCYYPEVAFAQVAYGASILSFLGGVRWGFAIPENSPAKPDWMNLTNSTVPALLAWLALLFRDNITEAAVLVIMGLGIALHYDLALLPTYPSWFKALRAILTVVAVFSLVGSLINSSVYPHKSLVSQEP.

5 helical membrane passes run 104-124 (ALYL…LMNV), 137-157 (VAYG…FAIP), 165-185 (DWMN…ALLF), 192-212 (AAVL…ALLP), and 223-243 (AILT…SSVY).

It is found in the membrane. This is Transmembrane protein 69 (tmem69) from Xenopus tropicalis (Western clawed frog).